Reading from the N-terminus, the 396-residue chain is UPF0164 protein TP_0858 (396 aa).

A signal peptide spans 1–28; it reads MGTMIRHTFTHRCGALLCALALGSSTMA.

This sequence belongs to the UPF0164 family.

The polypeptide is UPF0164 protein TP_0858 (Treponema pallidum (strain Nichols)).